The sequence spans 403 residues: S-adenosylmethionine synthase (403 aa).

Position 16 (His-16) interacts with ATP. Asp-18 is a Mg(2+) binding site. Glu-44 serves as a coordination point for K(+). Positions 57 and 100 each coordinate L-methionine. Residues 100-110 (QSPDIAQGVDR) form a flexible loop region. The interval 106 to 126 (QGVDRSYESRSGSASTDAHDL) is disordered. ATP-binding positions include 176-178 (DGK), 248-249 (KF), Asp-257, 263-264 (RK), Ala-280, and Lys-284. Residue Asp-257 coordinates L-methionine. Residue Lys-288 coordinates L-methionine.

It belongs to the AdoMet synthase family. As to quaternary structure, homotetramer; dimer of dimers. The cofactor is Mg(2+). Requires K(+) as cofactor.

The protein localises to the cytoplasm. It catalyses the reaction L-methionine + ATP + H2O = S-adenosyl-L-methionine + phosphate + diphosphate. Its pathway is amino-acid biosynthesis; S-adenosyl-L-methionine biosynthesis; S-adenosyl-L-methionine from L-methionine: step 1/1. In terms of biological role, catalyzes the formation of S-adenosylmethionine (AdoMet) from methionine and ATP. The overall synthetic reaction is composed of two sequential steps, AdoMet formation and the subsequent tripolyphosphate hydrolysis which occurs prior to release of AdoMet from the enzyme. This Clavibacter michiganensis subsp. michiganensis (strain NCPPB 382) protein is S-adenosylmethionine synthase.